A 317-amino-acid polypeptide reads, in one-letter code: Metaxin-1 (317 aa).

Residues K38, K41, and K78 each participate in a glycyl lysine isopeptide (Lys-Gly) (interchain with G-Cter in ubiquitin) cross-link. The helical transmembrane segment at 164–184 (EELEKELYQEARECLTLLSQR) threads the bilayer.

The protein belongs to the metaxin family. Interacts with MTX2/metaxin-2. Associates with the mitochondrial contact site and cristae organizing system (MICOS) complex, composed of at least MICOS10/MIC10, CHCHD3/MIC19, CHCHD6/MIC25, APOOL/MIC27, IMMT/MIC60, APOO/MIC23/MIC26 and QIL1/MIC13. This complex was also known under the names MINOS or MitOS complex. The MICOS complex associates with mitochondrial outer membrane proteins SAMM50, MTX1 and MTX2 (together described as components of the mitochondrial outer membrane sorting assembly machinery (SAM) complex) and DNAJC11, mitochondrial inner membrane protein TMEM11 and with HSPA9. The MICOS and SAM complexes together with DNAJC11 are part of a large protein complex spanning both membranes termed the mitochondrial intermembrane space bridging (MIB) complex. Interacts with ARMC1. In terms of processing, ubiquitinated by PRKN during mitophagy, leading to its degradation and enhancement of mitophagy. Deubiquitinated by USP30.

Its subcellular location is the mitochondrion outer membrane. Its function is as follows. Involved in transport of proteins into the mitochondrion. Essential for embryonic development. This chain is Metaxin-1 (MTX1), found in Sus scrofa (Pig).